The sequence spans 2310 residues: Retinal-specific phospholipid-transporting ATPase ABCA4 (2310 aa).

The Cytoplasmic segment spans residues 1-21 (MGFLRQIQLLLWKNWTLRKRQ). Residues 22 to 42 (KIRFVVELVWPLSLFLVLIWL) form a helical membrane-spanning segment. The Extracellular segment spans residues 43–646 (RNANPLYSQH…MPYPCFVDDS (604 aa)). Intrachain disulfides connect Cys54/Cys81 and Cys75/Cys324. N-linked (GlcNAc...) asparagine glycosylation is present at Asn98. Mg(2+)-binding residues include Ser336 and Asn338. Residues Cys370 and Cys519 are joined by a disulfide bond. Residues Asn415 and Asn504 are each glycosylated (N-linked (GlcNAc...) asparagine). Residues Arg587 and Arg653 each contribute to the an N-all-trans-retinylidenephosphatidylethanolamine site. 3 disulfides stabilise this stretch: Cys641-Cys1489, Cys1443-Cys1454, and Cys1487-Cys1501. The helical transmembrane segment at 647 to 667 (FMIILNRCFPIFMVLAWIYSV) threads the bilayer. Topologically, residues 668 to 699 (SMTVKGIVLEKELRLKETLKNQGVSNAVIWCT) are cytoplasmic. The helical transmembrane segment at 700–720 (WFLDSFSIMALSIFLLTLFIM) threads the bilayer. Topologically, residues 721-730 (HGRILHYSDP) are extracellular. The chain crosses the membrane as a helical span at residues 731 to 751 (FILFLFLLAFATATIMQSFLL). Over 752–759 (STLFSKAS) the chain is Cytoplasmic. Residues 760 to 780 (LAAACSGVIYFTLYLPHVLCF) form a helical membrane-spanning segment. Residues 781–835 (AWQDRMTADLKTTVSLLSSVAFGFGTEYLVRFEEQGLGLQWSNIGKSPLEGDEFS) are Extracellular-facing. Residues 836–856 (FLLSMKMMLLDAALYGLLAWY) traverse the membrane as a helical segment. Residues 857–1375 (LDQVFPGDYG…IRSRKDFVAQ (519 aa)) lie on the Cytoplasmic side of the membrane. A disordered region spans residues 891 to 910 (ERALEKTEPLTEEMEDPEHP). Thr901 carries the phosphothreonine modification. The ABC transporter 1 domain occupies 929 to 1160 (VCVKNLVKVF…FGTGFYLTLV (232 aa)). ATP-binding residues include Phe938, Gly966, and Lys969. Thr970 serves as a coordination point for Mg(2+). ATP is bound by residues Thr971, Gln1010, Lys1054, Gly1064, Gly1065, and His1118. Phosphoserine is present on Ser1185. The interval 1311–1344 (RQYAQAPHTCSPGQVDPPKGQPSPEPEDPGVPFN) is disordered. The helical transmembrane segment at 1376–1396 (IVLPATFVFLALMLSIIVPPF) threads the bilayer. The Extracellular portion of the chain corresponds to 1397–1726 (GEFPALTLHP…VSPTTYWLTN (330 aa)). The N-linked (GlcNAc...) asparagine glycan is linked to Asn1468. 3 N-linked (GlcNAc...) asparagine glycosylation sites follow: Asn1528, Asn1587, and Asn1661. Residues 1727–1747 (FLWDIMNYAVSAGLVVGIFIG) traverse the membrane as a helical segment. Residues 1748-1758 (FQKKAYTSPDN) lie on the Cytoplasmic side of the membrane. Residues 1759 to 1779 (LPALVSLLMLYGWAVIPMMYP) traverse the membrane as a helical segment. The Extracellular portion of the chain corresponds to 1780–1791 (ASFLFEVPSTAY). A helical transmembrane segment spans residues 1792–1812 (VALSCANLFIGINSSAITFVL). The Cytoplasmic portion of the chain corresponds to 1813–1830 (ELFENNRTLLRFNAMLRK). A helical transmembrane segment spans residues 1831 to 1851 (LLIVFPHFCLGRGLIDLALSQ). At 1852–1872 (AVTDVYAQFGEEYSANPFQWD) the chain is on the extracellular side. The helical transmembrane segment at 1873-1893 (LIGKNLVAMAIEGVVYFLLTL) threads the bilayer. Residues 1894–2310 (LIQHHFFLTR…AEDKHTRSPQ (417 aa)) lie on the Cytoplasmic side of the membrane. The region spanning 1937-2169 (LKLNELTKVY…FGDGYIVTMK (233 aa)) is the ABC transporter 2 domain. ATP is bound by residues Asn1973, Gly1974, Lys1977, Thr1978, Thr1979, and Gly2072. Thr1978 serves as a coordination point for Mg(2+). The segment at 2243-2248 (VFVNFA) is essential for ATP binding and ATPase activity. The segment at 2266 to 2310 (ASWQAKLEEKSGRLQTQEPLPAGSEQLANGSNPTAAEDKHTRSPQ) is disordered. The segment covering 2301 to 2310 (AEDKHTRSPQ) has biased composition (basic and acidic residues).

It belongs to the ABC transporter superfamily. ABCA family. In terms of processing, N-glycosylated. Proteolytic cleavage by trypsin leads to a 120-kDa N-terminal fragment and a 115-kDa C-terminal fragment that are linked through disulfide bonds. Post-translationally, phosphorylation is independent of light exposure and modulates ATPase activity. In terms of tissue distribution, retinal-specific. Seems to be exclusively found in the rims of rod photoreceptor cells.

The protein localises to the membrane. It is found in the endoplasmic reticulum. The protein resides in the cell projection. Its subcellular location is the cilium. It localises to the photoreceptor outer segment. The enzyme catalyses an N-all-trans-retinylidenephosphatidylethanolamine(out) + ATP + H2O = an N-all-trans-retinylidenephosphatidylethanolamine(in) + ADP + phosphate + H(+). It carries out the reaction ATP + H2O + phospholipidSide 1 = ADP + phosphate + phospholipidSide 2.. It catalyses the reaction a 1,2-diacyl-sn-glycero-3-phosphoethanolamine(out) + ATP + H2O = a 1,2-diacyl-sn-glycero-3-phosphoethanolamine(in) + ADP + phosphate + H(+). The catalysed reaction is N-11-cis-retinylidenephosphatidylethanolamine(out) + ATP + H2O = N-11-cis-retinylidenephosphatidylethanolamine(in) + ADP + phosphate + H(+). The enzyme catalyses ATP + H2O = ADP + phosphate + H(+). Its activity is regulated as follows. ATPase activity is decreased by cholesterol and ceramide. Phospholipids translocase activity is highly reduced by berylium fluoride and aluminum floride. N-ethylmaleimide inhibits phospholipid translocase activity. In terms of biological role, flippase that catalyzes in an ATP-dependent manner the transport of retinal-phosphatidylethanolamine conjugates like the 11-cis and all-trans isomers of N-retinylidene-phosphatidylethanolamine from the lumen to the cytoplasmic leaflet of photoreceptor outer segment disk membranes, where N-cis-retinylidene-phosphatidylethanolamine (N-cis-R-PE) is then isomerized to its all-trans isomer (N-trans-R-PE) and reduced by RDH8 to produce all-trans-retinol (all-trans-rol) and therefore prevents the accumulation of excess of 11-cis-retinal and its schiff-base conjugate and the formation of toxic bisretinoid. Displays ATPase activity in vitro in absence of retinal substrate. May display GTPase activity that is strongly influenced by the lipid environment and the presence of retinoid compounds. Binds the unprotonated form of N-retinylidene-phosphatidylethanolamine with high affinity in the absence of ATP and ATP binding and hydrolysis induce a protein conformational change that causes the dissociation of N-retinylidene-phosphatidylethanolamine. In Mus musculus (Mouse), this protein is Retinal-specific phospholipid-transporting ATPase ABCA4.